Here is a 629-residue protein sequence, read N- to C-terminus: UvrABC system protein C (629 aa).

The GIY-YIG domain maps to 12-91 (DRPGCYLFKD…IKKHKPKYNI (80 aa)). The UVR domain maps to 200–235 (QEVLERLRARMEQAAERLEFERAAELRDQIRAIEKV).

Belongs to the UvrC family. As to quaternary structure, interacts with UvrB in an incision complex.

It is found in the cytoplasm. Functionally, the UvrABC repair system catalyzes the recognition and processing of DNA lesions. UvrC both incises the 5' and 3' sides of the lesion. The N-terminal half is responsible for the 3' incision and the C-terminal half is responsible for the 5' incision. This chain is UvrABC system protein C, found in Symbiobacterium thermophilum (strain DSM 24528 / JCM 14929 / IAM 14863 / T).